The sequence spans 67 residues: Putative cytosolic sulfotransferase 2 (67 aa).

31–33 (RDG) is a 3'-phosphoadenylyl sulfate binding site.

The protein belongs to the sulfotransferase 1 family.

The protein localises to the cytoplasm. Sulfotransferase that utilizes 3'-phospho-5'-adenylyl sulfate (PAPS) as sulfonate donor. The polypeptide is Putative cytosolic sulfotransferase 2 (SOT2) (Arabidopsis thaliana (Mouse-ear cress)).